The following is a 510-amino-acid chain: Inner membrane protein YeeR (510 aa).

Met1 is a topological domain (cytoplasmic). The chain crosses the membrane as a helical span at residues 2–22 (LQIVGALILLIAGFAILRLLF). The Periplasmic portion of the chain corresponds to 23-30 (RALISTAS). Residues 31–51 (ALAGLILLCLFGPALLAGYIT) traverse the membrane as a helical segment. Over 52-61 (ERITRLFHIR) the chain is Cytoplasmic. A helical membrane pass occupies residues 62-82 (WLAGVFLTIAGMIISFMWGLD). Topologically, residues 83-94 (GKHIALEAHTFD) are periplasmic. The helical transmembrane segment at 95-115 (SVKFILTTALAGGLLAVPLQI) threads the bilayer. The Cytoplasmic portion of the chain corresponds to 116–136 (KNIQQNGITPEDISKEINGYY). Residues 137-157 (CCFYTAFFLMACSACAPLIAL) traverse the membrane as a helical segment. Over 158 to 164 (QYDISPS) the chain is Periplasmic. Residues 165–185 (LMWWGGLLYWLAALVTLLWAA) traverse the membrane as a helical segment. Topologically, residues 186–510 (SQIQALKKLT…KIREGKVEER (325 aa)) are cytoplasmic.

Its subcellular location is the cell inner membrane. This Escherichia coli (strain K12) protein is Inner membrane protein YeeR (yeeR).